The primary structure comprises 177 residues: MGCPEVQDRPGSGYELEETPAPVPVEPCLGSRPWTLSGGLSMVLKNIKYALKNIPKERVTRLCPEVESPLSERFRGLQTLDKSKCIGCGICANTCPNSAIKIVKAPIAPGSEKKRWFPQIDIGHCLFCGLCIDQCPKGALSSGKEYCKGMVKWAHKDLLMTPEKLAREVDIQEGDER.

The tract at residues 1–21 is disordered; sequence MGCPEVQDRPGSGYELEETPA. 2 4Fe-4S ferredoxin-type domains span residues 76–105 and 116–145; these read GLQTLDKSKCIGCGICANTCPNSAIKIVKA and WFPQIDIGHCLFCGLCIDQCPKGALSSGKE. [4Fe-4S] cluster is bound by residues C85, C88, C91, C95, C125, C128, C131, and C135.

This sequence belongs to the complex I 23 kDa subunit family. The FPO complex is composed of at least 13 different subunits. The cofactor is [4Fe-4S] cluster.

It catalyses the reaction methanophenazine + reduced coenzyme F420-(gamma-L-Glu)(n) = dihydromethanophenazine + oxidized coenzyme F420-(gamma-L-Glu)(n) + H(+). Functionally, component of the F(420)H(2) dehydrogenase (FPO complex) which is part of the energy-conserving F(420)H(2):heterodisulfide oxidoreductase system. The membrane-bound electron transfer system of the complex plays an important role in the metabolism of methylotrophic methanogens when the organisms grow on methanol or methylamines. Catalyzes the oxidation of methanophenazine to dihydromethanophenazine. It shuttles electrons from F(420)H(2), via FAD and iron-sulfur (Fe-S) centers, to methanophenazine (an electron carrier in the membrane). It couples the redox reaction to proton translocation (for every two electrons transferred, two hydrogen ions are translocated across the cytoplasmic membrane), and thus conserves the redox energy in a proton gradient. It also catalyzes the oxidation of F(420)H(2) with quinones such as 2,3-dimethyl-1,4-naphthoquinone, 2-methyl-1,4-naphthoquinone and tetramethyl-p-benzoquinone. The sequence is that of F(420)H(2) dehydrogenase subunit I (fpoI) from Methanosarcina mazei (strain ATCC BAA-159 / DSM 3647 / Goe1 / Go1 / JCM 11833 / OCM 88) (Methanosarcina frisia).